We begin with the raw amino-acid sequence, 256 residues long: Anamorsin homolog (256 aa).

Residues 1-136 form an N-terminal SAM-like domain region; it reads MNSLSLELNK…DTNESSTINI (136 aa). The tract at residues 126–148 is disordered; sequence WDTNESSTINIPSTSSNNPWASI. The segment covering 131–144 has biased composition (low complexity); it reads SSTINIPSTSSNNP. The segment at 137–166 is linker; the sequence is PSTSSNNPWASIEGGDRINENDLVSENDKT. 4 residues coordinate [2Fe-2S] cluster: Cys176, Cys185, Cys188, and Cys190. The interval 176-190 is fe-S binding site A; that stretch reads CEVGKTKKACKNCTC. Positions 217, 220, 228, and 231 each coordinate [4Fe-4S] cluster. 2 short sequence motifs (cx2C motif) span residues 217–220 and 228–231; these read CGNC and CGGC. Residues 217–231 are fe-S binding site B; that stretch reads CGNCSLGDAFRCGGC.

The protein belongs to the anamorsin family. As to quaternary structure, monomer. [2Fe-2S] cluster serves as cofactor. It depends on [4Fe-4S] cluster as a cofactor.

Its subcellular location is the cytoplasm. The protein localises to the mitochondrion intermembrane space. Its function is as follows. Component of the cytosolic iron-sulfur (Fe-S) protein assembly (CIA) machinery. Required for the maturation of extramitochondrial Fe-S proteins. Part of an electron transfer chain functioning in an early step of cytosolic Fe-S biogenesis, facilitating the de novo assembly of a [4Fe-4S] cluster on the cytosolic Fe-S scaffold complex. Electrons are transferred from NADPH via a FAD- and FMN-containing diflavin oxidoreductase. Together with the diflavin oxidoreductase, also required for the assembly of the diferric tyrosyl radical cofactor of ribonucleotide reductase (RNR), probably by providing electrons for reduction during radical cofactor maturation in the catalytic small subunit. The polypeptide is Anamorsin homolog (rsc43) (Dictyostelium discoideum (Social amoeba)).